A 381-amino-acid chain; its full sequence is Teichoic acid glycerol-phosphate primase (381 aa).

This sequence belongs to the CDP-glycerol glycerophosphotransferase family.

It localises to the cell membrane. It carries out the reaction N-acetyl-beta-D-mannosaminyl-(1-&gt;4)-N-acetyl-alpha-D-glucosaminyl di-trans,octa-cis-undecaprenyl diphosphate + CDP-glycerol = 4-O-[(2R)-glycerylphospho]-N-acetyl-beta-D-mannosaminyl-(1-&gt;4)-N-acetyl-alpha-D-glucosaminyl di-trans,octa-cis-undecaprenyl diphosphate + CMP + H(+). It participates in cell wall biogenesis; poly(glycerol phosphate) teichoic acid biosynthesis. Catalyzes the addition of a single glycerol phosphate residue to the prenoldiphosphate-linked disaccharide, as a primer for polymerisation by TagF. The polypeptide is Teichoic acid glycerol-phosphate primase (tagB) (Bacillus subtilis (strain 168)).